A 93-amino-acid polypeptide reads, in one-letter code: Small ribosomal subunit protein uS19 (93 aa).

This sequence belongs to the universal ribosomal protein uS19 family.

Protein S19 forms a complex with S13 that binds strongly to the 16S ribosomal RNA. The polypeptide is Small ribosomal subunit protein uS19 (Syntrophus aciditrophicus (strain SB)).